Reading from the N-terminus, the 156-residue chain is SsrA-binding protein (156 aa).

The protein belongs to the SmpB family.

The protein resides in the cytoplasm. Required for rescue of stalled ribosomes mediated by trans-translation. Binds to transfer-messenger RNA (tmRNA), required for stable association of tmRNA with ribosomes. tmRNA and SmpB together mimic tRNA shape, replacing the anticodon stem-loop with SmpB. tmRNA is encoded by the ssrA gene; the 2 termini fold to resemble tRNA(Ala) and it encodes a 'tag peptide', a short internal open reading frame. During trans-translation Ala-aminoacylated tmRNA acts like a tRNA, entering the A-site of stalled ribosomes, displacing the stalled mRNA. The ribosome then switches to translate the ORF on the tmRNA; the nascent peptide is terminated with the 'tag peptide' encoded by the tmRNA and targeted for degradation. The ribosome is freed to recommence translation, which seems to be the essential function of trans-translation. The polypeptide is SsrA-binding protein (Clostridium botulinum (strain Loch Maree / Type A3)).